A 1486-amino-acid chain; its full sequence is Protein PRRC2B (1486 aa).

Disordered stretches follow at residues 1-20 (MSDR…KYST), 39-306 (VIPR…FPLP), 320-341 (QMND…PLRQ), 385-519 (KFSD…AREE), and 531-658 (LDQK…EQLY). The span at 88-137 (ANKQDQQDPKSSSVTASQPPESQPQPGLQKSVSNLQKPTQSISQENTNSV) shows a compositional bias: polar residues. Residues Ser166, Ser168, Ser222, and Ser226 each carry the phosphoserine modification. Over residues 219-235 (SAASLSASPTELGSRNA) the composition is skewed to polar residues. Residue Thr228 is modified to Phosphothreonine. Lys251 is covalently cross-linked (Glycyl lysine isopeptide (Lys-Gly) (interchain with G-Cter in SUMO2)). Positions 288–300 (SPQSSENQTTVER) are enriched in polar residues. Phosphoserine occurs at positions 387 and 415. 3 stretches are compositionally biased toward basic and acidic residues: residues 422-433 (TDAKRTQEEGKD), 478-488 (HSAEDKEDKPP), and 501-519 (AVER…AREE). At Ser479 the chain carries Phosphoserine. Positions 494–544 (IQSEMSEAVERARKRREEEERRAREERLAACAAKLKQLDQKCRQAQKANET) form a coiled coil. A Phosphoserine modification is found at Ser555. Residues 600 to 611 (SNSSSSSSSSSS) show a composition bias toward low complexity. Ser621 bears the Phosphoserine mark. Residues 638–656 (QRQQQQQQQQQQQQQQQEQ) show a composition bias toward low complexity. A Glycyl lysine isopeptide (Lys-Gly) (interchain with G-Cter in SUMO2) cross-link involves residue Lys751. At Thr753 the chain carries Phosphothreonine. A phosphoserine mark is found at Ser762 and Ser793. Disordered stretches follow at residues 792–847 (RSPD…EARK), 893–918 (EERR…IPPR), and 950–1080 (ALPV…PGAV). The stretch at 880–904 (IEVLTKKQRRLLEEERRKKEQAAQV) forms a coiled coil. A compositionally biased stretch (polar residues) spans 960-986 (SWRTAVTAFSSTEPGTSEQGFKSSQGD). Over residues 998–1007 (SSATSSQRSS) the composition is skewed to low complexity. Basic and acidic residues-rich tracts occupy residues 1025 to 1055 (SKAD…EHRP) and 1062 to 1074 (RSLK…EGAE). Ser1070 and Ser1159 each carry phosphoserine. Disordered stretches follow at residues 1177 to 1205 (KAWE…SSVG), 1410 to 1443 (QSIQ…TSRE), and 1455 to 1486 (ADSK…AWEP). Polar residues predominate over residues 1181–1191 (NSPSLPEQSSP). Over residues 1410–1421 (QSIQLPPGQSLS) the composition is skewed to low complexity. Residues 1457 to 1474 (SKQNVPTGGSAPSPQAYR) show a composition bias toward polar residues.

The polypeptide is Protein PRRC2B (Prrc2b) (Mus musculus (Mouse)).